The chain runs to 165 residues: UPF0262 protein blr1257 (165 aa).

The protein belongs to the UPF0262 family.

The polypeptide is UPF0262 protein blr1257 (Bradyrhizobium diazoefficiens (strain JCM 10833 / BCRC 13528 / IAM 13628 / NBRC 14792 / USDA 110)).